Consider the following 79-residue polypeptide: Small ribosomal subunit protein uS17 (79 aa).

It belongs to the universal ribosomal protein uS17 family. In terms of assembly, part of the 30S ribosomal subunit.

In terms of biological role, one of the primary rRNA binding proteins, it binds specifically to the 5'-end of 16S ribosomal RNA. The protein is Small ribosomal subunit protein uS17 of Rhodospirillum rubrum (strain ATCC 11170 / ATH 1.1.1 / DSM 467 / LMG 4362 / NCIMB 8255 / S1).